We begin with the raw amino-acid sequence, 43 residues long: Protein PsbN (43 aa).

The helical transmembrane segment at 7 to 27 threads the bilayer; that stretch reads LSIGIAVVVIAVTGFSIYTAF.

This sequence belongs to the PsbN family.

Its subcellular location is the cellular thylakoid membrane. May play a role in photosystem I and II biogenesis. The polypeptide is Protein PsbN (Picosynechococcus sp. (strain ATCC 27264 / PCC 7002 / PR-6) (Agmenellum quadruplicatum)).